Reading from the N-terminus, the 502-residue chain is ATP synthase subunit alpha (502 aa).

Glycine 169–threonine 176 is an ATP binding site.

Belongs to the ATPase alpha/beta chains family. As to quaternary structure, F-type ATPases have 2 components, CF(1) - the catalytic core - and CF(0) - the membrane proton channel. CF(1) has five subunits: alpha(3), beta(3), gamma(1), delta(1), epsilon(1). CF(0) has three main subunits: a(1), b(2) and c(9-12). The alpha and beta chains form an alternating ring which encloses part of the gamma chain. CF(1) is attached to CF(0) by a central stalk formed by the gamma and epsilon chains, while a peripheral stalk is formed by the delta and b chains.

It localises to the cell inner membrane. The enzyme catalyses ATP + H2O + 4 H(+)(in) = ADP + phosphate + 5 H(+)(out). Functionally, produces ATP from ADP in the presence of a proton gradient across the membrane. The alpha chain is a regulatory subunit. The sequence is that of ATP synthase subunit alpha from Geotalea uraniireducens (strain Rf4) (Geobacter uraniireducens).